The following is a 332-amino-acid chain: Ketol-acid reductoisomerase (NADP(+)) (332 aa).

The region spanning 2-182 is the KARI N-terminal Rossmann domain; that stretch reads AKVYHDTEVS…GATRAGVLET (181 aa). NADP(+) contacts are provided by residues 25–28, Arg-48, Ser-53, and 83–86; these read YGSQ and DTEQ. His-108 is a catalytic residue. Gly-134 contacts NADP(+). Residues 183-328 form the KARI C-terminal knotted domain; it reads TFKEETETDL…KVLREMMPWL (146 aa). Mg(2+) is bound by residues Asp-191, Glu-195, Glu-227, and Glu-231. Ser-252 contributes to the substrate binding site.

The protein belongs to the ketol-acid reductoisomerase family. Requires Mg(2+) as cofactor.

The enzyme catalyses (2R)-2,3-dihydroxy-3-methylbutanoate + NADP(+) = (2S)-2-acetolactate + NADPH + H(+). It carries out the reaction (2R,3R)-2,3-dihydroxy-3-methylpentanoate + NADP(+) = (S)-2-ethyl-2-hydroxy-3-oxobutanoate + NADPH + H(+). The protein operates within amino-acid biosynthesis; L-isoleucine biosynthesis; L-isoleucine from 2-oxobutanoate: step 2/4. It functions in the pathway amino-acid biosynthesis; L-valine biosynthesis; L-valine from pyruvate: step 2/4. In terms of biological role, involved in the biosynthesis of branched-chain amino acids (BCAA). Catalyzes an alkyl-migration followed by a ketol-acid reduction of (S)-2-acetolactate (S2AL) to yield (R)-2,3-dihydroxy-isovalerate. In the isomerase reaction, S2AL is rearranged via a Mg-dependent methyl migration to produce 3-hydroxy-3-methyl-2-ketobutyrate (HMKB). In the reductase reaction, this 2-ketoacid undergoes a metal-dependent reduction by NADPH to yield (R)-2,3-dihydroxy-isovalerate. This Dictyoglomus turgidum (strain DSM 6724 / Z-1310) protein is Ketol-acid reductoisomerase (NADP(+)).